We begin with the raw amino-acid sequence, 398 residues long: Cytochrome b (398 aa).

The helical transmembrane segment at 45 to 65 threads the bilayer; the sequence is LGSIAGIALVIQIITGVILAM. Residues histidine 95 and histidine 109 each contribute to the heme b site. 9 consecutive transmembrane segments (helical) span residues 96–116, 129–149, 164–184, 192–212, 245–265, 277–297, 304–324, 339–359, and 366–386; these read AVGA…GLYY, IGII…VLPW, FSAI…GFSV, FFSL…LHLV, FVGF…EPNY, PLVT…YAIL, LGGV…PWLD, MAFW…GQPA, and ISRF…PLIG. Histidine 196 and histidine 210 together coordinate heme b.

This sequence belongs to the cytochrome b family. The main subunits of complex b-c1 are: cytochrome b, cytochrome c1 and the Rieske protein. Heme b serves as cofactor.

Its subcellular location is the cell membrane. Functionally, component of the ubiquinol-cytochrome c reductase complex (complex III or cytochrome b-c1 complex), which is a respiratory chain that generates an electrochemical potential coupled to ATP synthesis. The chain is Cytochrome b (petB) from Rickettsia conorii (strain ATCC VR-613 / Malish 7).